The primary structure comprises 3391 residues: Genome polyprotein (3391 aa).

The tract at residues 1–15 is interaction with host EXOC1; the sequence is MNDQRKEAKNTPFNM. Residues 1-101 lie on the Cytoplasmic side of the membrane; the sequence is MNDQRKEAKN…LNILNRRRRS (101 aa). Residues 37-72 form a hydrophobic; homodimerization of capsid protein C region; the sequence is MLQGRGPLKLYMALVAFLRFLTIPPTAGILKRWGTI. Residues 101–114 constitute a propeptide, ER anchor for the Capsid protein C, removed in mature form by serine protease NS3; the sequence is SAGMIIMLIPTVMA. Positions 101-114 are cleaved as a propeptide — ER anchor for the capsid protein C, removed in mature form by serine protease NS3; sequence SAGMIIMLIPTVMA. A helical membrane pass occupies residues 102-122; that stretch reads AGMIIMLIPTVMAFHLTTRNG. At 123-242 the chain is on the extracellular side; the sequence is EPHMIVSRQE…HVQRIETWIL (120 aa). Residue asparagine 183 is glycosylated (N-linked (GlcNAc...) asparagine; by host). The chain crosses the membrane as a helical span at residues 243 to 260; sequence RHPGFTMMAAILAYTIGT. Residue threonine 261 is a topological domain, cytoplasmic. A helical transmembrane segment spans residues 262–280; sequence HFQRALILILLTAVTPSMT. At 281 to 727 the chain is on the extracellular side; the sequence is MRCIGMSNRD…QVFGAIYGAA (447 aa). Intrachain disulfides connect cysteine 283–cysteine 310, cysteine 340–cysteine 401, cysteine 354–cysteine 385, and cysteine 372–cysteine 396. Asparagine 347 carries an N-linked (GlcNAc...) asparagine; by host glycan. A fusion peptide region spans residues 378 to 391; the sequence is DRGWGNGCGLFGKG. An N-linked (GlcNAc...) asparagine; by host glycan is attached at asparagine 433. Intrachain disulfides connect cysteine 465/cysteine 565 and cysteine 582/cysteine 613. The helical transmembrane segment at 728–748 threads the bilayer; the sequence is FSGVSWTMKILIGVIITWIGM. The Cytoplasmic portion of the chain corresponds to 749 to 752; the sequence is NSRS. A helical membrane pass occupies residues 753–773; that stretch reads TSLSVTLVLVGIVTLYLGVMV. Topologically, residues 774–1195 are extracellular; the sequence is QADSGCVVSW…MVGATMTDDI (422 aa). 6 disulfide bridges follow: cysteine 779–cysteine 790, cysteine 830–cysteine 918, cysteine 954–cysteine 998, cysteine 1055–cysteine 1104, cysteine 1066–cysteine 1088, and cysteine 1087–cysteine 1091. N-linked (GlcNAc...) asparagine; by host glycosylation is found at asparagine 905 and asparagine 982. Asparagine 1134 carries N-linked (GlcNAc...) asparagine; by host glycosylation. Residues 1196–1220 form a helical membrane-spanning segment; the sequence is GMGVTYLALLAAFKVRPTFAAGLLL. Residues 1221–1226 lie on the Cytoplasmic side of the membrane; that stretch reads RKLTSK. Residues 1227-1245 traverse the membrane as a helical segment; it reads ELMMTTIGIVLSSQSTIPE. Topologically, residues 1246–1269 are lumenal; the sequence is TILELTDALALGMMVLKMVRNMEK. The chain crosses the membrane as a helical span at residues 1270 to 1290; sequence YQLAVTIMAILCVPNAVILQN. A topological domain (cytoplasmic) is located at residue alanine 1291. The helical transmembrane segment at 1292-1310 threads the bilayer; that stretch reads WKVSCTILAVVSVSPLFLT. The Lumenal portion of the chain corresponds to 1311–1317; the sequence is SSQQKTD. A helical transmembrane segment spans residues 1318–1338; it reads WIPLALTIKGLNPTAIFLTTL. Topologically, residues 1339-1346 are cytoplasmic; sequence SRTSKKRS. A helical membrane pass occupies residues 1347–1367; the sequence is WPLNEAIMAVGMVSILASSLL. Residues 1368 to 1370 lie on the Lumenal side of the membrane; that stretch reads KND. Residues 1371-1391 form a helical membrane-spanning segment; that stretch reads IPMTGPLVAGGLLTVCYVLTG. The Cytoplasmic segment spans residues 1392–1447; it reads RSADLELERAADVKWEDQAEISGSSPILSITISEDGSMSIKNEEEEQTLTILIRRG. An interacts with and activates NS3 protease region spans residues 1398 to 1437; the sequence is LERAADVKWEDQAEISGSSPILSITISEDGSMSIKNEEEE. The helical intramembrane region spans 1448 to 1468; the sequence is LLVISGLFPVSIPITAAAWYL. Residues 1469–2147 are Cytoplasmic-facing; sequence WEVKKQRAGV…LSELPETLET (679 aa). Residues 1476–1653 enclose the Peptidase S7 domain; that stretch reads AGVLWDVPSP…EKSIEDNPEI (178 aa). Residues histidine 1526, aspartate 1550, and serine 1610 each act as charge relay system; for serine protease NS3 activity in the active site. The 157-residue stretch at 1655 to 1811 folds into the Helicase ATP-binding domain; sequence DDIFRKRRLT…QSNAPIIDEE (157 aa). Positions 1659–1662 are important for RNA-binding; it reads RKRR. 1668 to 1675 is a binding site for ATP; the sequence is LHPGAGKT. The DEAH box motif lies at 1759-1762; the sequence is DEAH. Residues 1821-1988 form the Helicase C-terminal domain; sequence SGHEWVTDFK…IIPSMFEPER (168 aa). Lysine 1863 carries the post-translational modification N6-acetyllysine; by host. Residues 2148–2168 traverse the membrane as a helical segment; that stretch reads LLLLTLLATVTGGIFLFLMSA. Topologically, residues 2169–2170 are lumenal; sequence RG. The helical intramembrane region spans 2171–2191; sequence IGKMTLGMCCIITASILLWYA. Glutamine 2192 is a topological domain (lumenal). Residues 2193–2213 traverse the membrane as a helical segment; it reads IQPHWIAASIILEFFLIVLLI. Over 2214-2228 the chain is Cytoplasmic; that stretch reads PEPEKQRTPQDNQLT. Residues 2229-2249 traverse the membrane as a helical segment; sequence YVVIAILTVVAATMANEMGFL. Topologically, residues 2250–2274 are lumenal; that stretch reads EKTKKDLGLGSIATQQPESNILDID. Positions 2275–2295 form an intramembrane region, helical; the sequence is LRPASAWTLYAVATTFVTPML. The Lumenal segment spans residues 2296 to 2316; that stretch reads RHSIENSSVNVSLTAIANQAT. N-linked (GlcNAc...) asparagine; by host glycosylation is found at asparagine 2301 and asparagine 2305. Positions 2317-2337 form an intramembrane region, helical; it reads VLMGLGKGWPLSKMDIGVPLL. Topologically, residues 2338–2347 are lumenal; it reads AIGCYSQVNP. Residues 2348–2368 form a helical membrane-spanning segment; sequence TTLTAALFLLVAHYAIIGPAL. Over 2369–2413 the chain is Cytoplasmic; that stretch reads QAKASREAQKRAAAGIMKNPTVDGITVIDLDPIPYDPKFEKQLGQ. A helical transmembrane segment spans residues 2414-2434; sequence VMLLVLCVTQVLMMRTTWALC. Residues 2435-2459 lie on the Lumenal side of the membrane; that stretch reads EALTLATGPISTLSEGNPGRFWNTT. The N-linked (GlcNAc...) asparagine; by host glycan is linked to asparagine 2457. The helical transmembrane segment at 2460 to 2480 threads the bilayer; it reads IAVSMANIFRGSYLAGAGLLF. The Cytoplasmic portion of the chain corresponds to 2481–3391; the sequence is SIMKNTTNTR…REEEEAGVLW (911 aa). The mRNA cap 0-1 NS5-type MT domain occupies 2493-2755; it reads TGNIGETLGE…DVDLGSGTRN (263 aa). Position 2547 (serine 2547) interacts with S-adenosyl-L-methionine. Serine 2547 carries the post-translational modification Phosphoserine. The For 2'-O-MTase activity role is filled by lysine 2552. The SUMO-interacting motif signature appears at 2568-2571; it reads VVDL. The S-adenosyl-L-methionine site is built by glycine 2577, tryptophan 2578, threonine 2595, lysine 2596, aspartate 2622, and valine 2623. Aspartate 2637 functions as the For 2'-O-MTase activity in the catalytic mechanism. Isoleucine 2638 serves as a coordination point for S-adenosyl-L-methionine. Residues lysine 2672 and glutamate 2708 each act as for 2'-O-MTase activity in the active site. Tyrosine 2710 is a binding site for S-adenosyl-L-methionine. 4 residues coordinate Zn(2+): glutamate 2929, histidine 2933, cysteine 2938, and cysteine 2941. The RdRp catalytic domain maps to 3020-3169; sequence AMYADDTAGW…PLDDRLPSAL (150 aa). Zn(2+)-binding residues include histidine 3203, cysteine 3219, and cysteine 3338.

This sequence in the N-terminal section; belongs to the class I-like SAM-binding methyltransferase superfamily. mRNA cap 0-1 NS5-type methyltransferase family. In terms of assembly, homodimer. Interacts (via N-terminus) with host EXOC1 (via C-terminus); this interaction results in EXOC1 degradation through the proteasome degradation pathway. As to quaternary structure, forms heterodimers with envelope protein E in the endoplasmic reticulum and Golgi. Homodimer; in the endoplasmic reticulum and Golgi. Interacts with protein prM. Interacts with non-structural protein 1. In terms of assembly, homodimer; Homohexamer when secreted. Interacts with envelope protein E. Interacts with host PRKAA1. As to quaternary structure, interacts (via N-terminus) with serine protease NS3. Forms a heterodimer with serine protease NS3. May form homooligomers. In terms of assembly, forms a heterodimer with NS2B. Interacts with NS4B. Interacts with unphosphorylated RNA-directed RNA polymerase NS5; this interaction stimulates RNA-directed RNA polymerase NS5 guanylyltransferase activity. Interacts with host SHFL. As to quaternary structure, interacts with host MAVS; this interaction inhibits the synthesis of IFN-beta. Interacts with host SHFL. Interacts with host AUP1; the interaction occurs in the presence of Dengue virus NS4B and induces lipophagy which facilitates production of virus progeny particles. May interact with host SRPRA and SEC61G. Interacts with serine protease NS3. In terms of assembly, homodimer. Interacts with host STAT2; this interaction inhibits the phosphorylation of the latter, and, when all viral proteins are present (polyprotein), targets STAT2 for degradation. Interacts with serine protease NS3. Interacts with host PAF1 complex; the interaction may prevent the recruitment of the PAF1 complex to interferon-responsive genes, and thus reduces the immune response. In terms of processing, specific enzymatic cleavages in vivo yield mature proteins. Cleavages in the lumen of endoplasmic reticulum are performed by host signal peptidase, whereas cleavages in the cytoplasmic side are performed by serine protease NS3. Signal cleavage at the 2K-4B site requires a prior NS3 protease-mediated cleavage at the 4A-2K site. Post-translationally, cleaved in post-Golgi vesicles by a host furin, releasing the mature small envelope protein M, and peptide pr. This cleavage is incomplete as up to 30% of viral particles still carry uncleaved prM. N-glycosylated. In terms of processing, N-glycosylated. The excreted form is glycosylated and this is required for efficient secretion of the protein from infected cells. Post-translationally, acetylated by host KAT5. Acetylation modulates NS3 RNA-binding and unwinding activities and plays an important positive role for viral replication. Sumoylation of RNA-directed RNA polymerase NS5 increases NS5 protein stability allowing proper viral RNA replication. In terms of processing, phosphorylated on serines residues. This phosphorylation may trigger NS5 nuclear localization.

Its subcellular location is the virion. The protein resides in the host nucleus. It localises to the host cytoplasm. The protein localises to the host perinuclear region. It is found in the secreted. Its subcellular location is the virion membrane. The protein resides in the host endoplasmic reticulum membrane. It localises to the host mitochondrion. The catalysed reaction is Selective hydrolysis of -Xaa-Xaa-|-Yaa- bonds in which each of the Xaa can be either Arg or Lys and Yaa can be either Ser or Ala.. It carries out the reaction RNA(n) + a ribonucleoside 5'-triphosphate = RNA(n+1) + diphosphate. The enzyme catalyses a ribonucleoside 5'-triphosphate + H2O = a ribonucleoside 5'-diphosphate + phosphate + H(+). It catalyses the reaction ATP + H2O = ADP + phosphate + H(+). The catalysed reaction is a 5'-end (5'-triphosphoguanosine)-ribonucleoside in mRNA + S-adenosyl-L-methionine = a 5'-end (N(7)-methyl 5'-triphosphoguanosine)-ribonucleoside in mRNA + S-adenosyl-L-homocysteine. It carries out the reaction a 5'-end (N(7)-methyl 5'-triphosphoguanosine)-ribonucleoside in mRNA + S-adenosyl-L-methionine = a 5'-end (N(7)-methyl 5'-triphosphoguanosine)-(2'-O-methyl-ribonucleoside) in mRNA + S-adenosyl-L-homocysteine + H(+). Its function is as follows. Plays a role in virus budding by binding to the cell membrane and gathering the viral RNA into a nucleocapsid that forms the core of a mature virus particle. During virus entry, may induce genome penetration into the host cytoplasm after hemifusion induced by the surface proteins. Can migrate to the cell nucleus where it modulates host functions. Overcomes the anti-viral effects of host EXOC1 by sequestering and degrading the latter through the proteasome degradation pathway. In terms of biological role, inhibits RNA silencing by interfering with host Dicer. Functionally, prevents premature fusion activity of envelope proteins in trans-Golgi by binding to envelope protein E at pH6.0. After virion release in extracellular space, gets dissociated from E dimers. Acts as a chaperone for envelope protein E during intracellular virion assembly by masking and inactivating envelope protein E fusion peptide. prM is the only viral peptide matured by host furin in the trans-Golgi network probably to avoid catastrophic activation of the viral fusion activity in acidic Golgi compartment prior to virion release. prM-E cleavage is inefficient, and many virions are only partially matured. These uncleaved prM would play a role in immune evasion. Its function is as follows. May play a role in virus budding. Exerts cytotoxic effects by activating a mitochondrial apoptotic pathway through M ectodomain. May display a viroporin activity. In terms of biological role, binds to host cell surface receptor and mediates fusion between viral and cellular membranes. Envelope protein is synthesized in the endoplasmic reticulum in the form of heterodimer with protein prM. They play a role in virion budding in the ER, and the newly formed immature particle is covered with 60 spikes composed of heterodimer between precursor prM and envelope protein E. The virion is transported to the Golgi apparatus where the low pH causes dissociation of PrM-E heterodimers and formation of E homodimers. prM-E cleavage is inefficient, and many virions are only partially matured. These uncleaved prM would play a role in immune evasion. Functionally, involved in immune evasion, pathogenesis and viral replication. Once cleaved off the polyprotein, is targeted to three destinations: the viral replication cycle, the plasma membrane and the extracellular compartment. Essential for viral replication. Required for formation of the replication complex and recruitment of other non-structural proteins to the ER-derived membrane structures. Excreted as a hexameric lipoparticle that plays a role against host immune response. Antagonizing the complement function. Binds to the host macrophages and dendritic cells. Inhibits signal transduction originating from Toll-like receptor 3 (TLR3). Mediates complement activation, which may contribute to the pathogenesis of the vascular leakage that occurs in severe dengue disease. Activates autophagy through the AMPK/ERK/mTOR signaling pathway. Mechanistically, acts as the assembly platform for STK11-AMPK interactions and promotes STK11-AMPK interactions. In turn, promotes phosphorylation of the AMPK kinase structural domain and activates AMPK, thereby positively regulating the AMPK/ERK/mTOR signaling pathway and inducing autophagy. Disrupts the host endothelial glycocalyx layer of host pulmonary microvascular endothelial cells, inducing degradation of sialic acid and shedding of heparan sulfate proteoglycans. NS1 induces expression of sialidases, heparanase, and activates cathepsin L, which activates heparanase via enzymatic cleavage. These effects are probably linked to the endothelial hyperpermeability observed in severe dengue disease. Its function is as follows. Component of the viral RNA replication complex that functions in virion assembly and antagonizes the host immune response. In terms of biological role, required cofactor for the serine protease function of NS3. May have membrane-destabilizing activity and form viroporins. Functionally, displays three enzymatic activities: serine protease, NTPase and RNA helicase. NS3 serine protease, in association with NS2B, performs its autocleavage and cleaves the polyprotein at dibasic sites in the cytoplasm: C-prM, NS2A-NS2B, NS2B-NS3, NS3-NS4A, NS4A-2K and NS4B-NS5. NS3 RNA helicase binds RNA and unwinds dsRNA in the 3' to 5' direction. Regulates the ATPase activity of the NS3 helicase activity. NS4A allows NS3 helicase to conserve energy during unwinding. Plays a role in the inhibition of the host innate immune response. Interacts with host MAVS and thereby prevents the interaction between RIGI and MAVS. In turn, IFN-beta production is impaired. Interacts with host AUP1 which mediates induction of lipophagy in host cells and facilitates production of virus progeny particles. Its function is as follows. Functions as a signal peptide for NS4B and is required for the interferon antagonism activity of the latter. In terms of biological role, induces the formation of ER-derived membrane vesicles where the viral replication takes place. Inhibits interferon (IFN)-induced host STAT1 phosphorylation and nuclear translocation, thereby preventing the establishment of cellular antiviral state by blocking the IFN-alpha/beta pathway. Functionally, replicates the viral (+) and (-) RNA genome, and performs the capping of genomes in the cytoplasm. NS5 methylates viral RNA cap at guanine N-7 and ribose 2'-O positions. Besides its role in RNA genome replication, also prevents the establishment of cellular antiviral state by blocking the interferon-alpha/beta (IFN-alpha/beta) signaling pathway. Inhibits host TYK2 and STAT2 phosphorylation, thereby preventing activation of JAK-STAT signaling pathway. May reduce immune responses by preventing the recruitment of the host PAF1 complex to interferon-responsive genes. The chain is Genome polyprotein from Dengue virus type 2 (strain 16681-PDK53) (DENV-2).